The primary structure comprises 340 residues: GTP 3',8-cyclase (340 aa).

The 220-residue stretch at 8-227 (KLGRPIRDLR…SMIQEEFDIE (220 aa)) folds into the Radical SAM core domain. Arginine 17 lines the GTP pocket. Residues cysteine 24 and cysteine 28 each contribute to the [4Fe-4S] cluster site. Tyrosine 30 is a binding site for S-adenosyl-L-methionine. Cysteine 31 serves as a coordination point for [4Fe-4S] cluster. GTP is bound at residue arginine 71. Glycine 75 contributes to the S-adenosyl-L-methionine binding site. Threonine 102 is a binding site for GTP. Serine 126 lines the S-adenosyl-L-methionine pocket. Position 163 (lysine 163) interacts with GTP. S-adenosyl-L-methionine is bound at residue methionine 197. [4Fe-4S] cluster is bound by residues cysteine 261 and cysteine 264. GTP is bound at residue 266-268 (RAR). Cysteine 278 is a binding site for [4Fe-4S] cluster.

Belongs to the radical SAM superfamily. MoaA family. As to quaternary structure, monomer and homodimer. The cofactor is [4Fe-4S] cluster.

The catalysed reaction is GTP + AH2 + S-adenosyl-L-methionine = (8S)-3',8-cyclo-7,8-dihydroguanosine 5'-triphosphate + 5'-deoxyadenosine + L-methionine + A + H(+). It functions in the pathway cofactor biosynthesis; molybdopterin biosynthesis. Its function is as follows. Catalyzes the cyclization of GTP to (8S)-3',8-cyclo-7,8-dihydroguanosine 5'-triphosphate. The polypeptide is GTP 3',8-cyclase (Staphylococcus carnosus (strain TM300)).